Consider the following 493-residue polypeptide: Cysteine--tRNA ligase (493 aa).

C29 lines the Zn(2+) pocket. Residues 31–41 carry the 'HIGH' region motif; the sequence is PTVYDFAHIGN. Residues C227, H252, and E256 each coordinate Zn(2+). The 'KMSKS' region motif lies at 285–289; that stretch reads KMSKS. K288 is a binding site for ATP.

Belongs to the class-I aminoacyl-tRNA synthetase family. Monomer. Requires Zn(2+) as cofactor.

Its subcellular location is the cytoplasm. The enzyme catalyses tRNA(Cys) + L-cysteine + ATP = L-cysteinyl-tRNA(Cys) + AMP + diphosphate. This is Cysteine--tRNA ligase from Rhodopseudomonas palustris (strain HaA2).